The following is a 301-amino-acid chain: Protoheme IX farnesyltransferase (301 aa).

Helical transmembrane passes span 34 to 54 (LVVFTAITGMLIAPGTIHPLI), 55 to 75 (GLVSTVCVALGAGAAGAFNMW), 102 to 121 (AWECGMVLATLSVFVMAIAV), 125 to 144 (SALLLAGSIFSYAVVYTMLL), 152 to 172 (IVIGGIAGAFPPVIGWASVSG), 181 to 201 (LFAIIFVWTPPHFWAIALLTL), 222 to 242 (SHILLYSIILAVVGATPGLFV), 247 to 267 (LYEILATGLSATFIAYAIAVF), and 280 to 300 (GLFKYSIYYLFLLFAVVIACV).

The protein belongs to the UbiA prenyltransferase family. Protoheme IX farnesyltransferase subfamily.

Its subcellular location is the cell inner membrane. The catalysed reaction is heme b + (2E,6E)-farnesyl diphosphate + H2O = Fe(II)-heme o + diphosphate. Its pathway is porphyrin-containing compound metabolism; heme O biosynthesis; heme O from protoheme: step 1/1. Functionally, converts heme B (protoheme IX) to heme O by substitution of the vinyl group on carbon 2 of heme B porphyrin ring with a hydroxyethyl farnesyl side group. This is Protoheme IX farnesyltransferase from Anaplasma marginale (strain Florida).